Reading from the N-terminus, the 1740-residue chain is Vitamin B12-dependent ribonucleoside-diphosphate reductase (1740 aa).

The region spanning 4–96 (EKVMKRDGRI…LYRKKKAEIR (93 aa)) is the ATP-cone domain. Substrate-binding positions include Thr-257, 272 to 273 (AC), and Gly-301. An intrachain disulfide couples Cys-273 to Cys-1308. A DOD-type homing endonuclease 1 domain is found at 443–582 (LAGFIAGDGC…VTHYLNALGI (140 aa)). The active-site Proton acceptor is Asn-913. 913–914 (NP) serves as a coordination point for substrate. The region spanning 1063–1194 (VLGWFIGDGY…VQDLLLLFGI (132 aa)) is the DOD-type homing endonuclease 2 domain. Catalysis depends on Cys-1297, which acts as the Cysteine radical intermediate. Residues 1297-1299 (CGE) and 1471-1475 (PTGSV) contribute to the substrate site. Residue Glu-1299 is the Proton acceptor of the active site.

It belongs to the ribonucleoside diphosphate reductase class-2 family. Adenosylcob(III)alamin serves as cofactor. This protein undergoes a protein self splicing that involves a post-translational excision of the intervening region (intein) followed by peptide ligation.

It catalyses the reaction a 2'-deoxyribonucleoside 5'-diphosphate + [thioredoxin]-disulfide + H2O = a ribonucleoside 5'-diphosphate + [thioredoxin]-dithiol. In terms of biological role, provides the precursors necessary for DNA synthesis. Catalyzes the biosynthesis of deoxyribonucleotides from the corresponding ribonucleotides. The polypeptide is Vitamin B12-dependent ribonucleoside-diphosphate reductase (rnr) (Pyrococcus furiosus (strain ATCC 43587 / DSM 3638 / JCM 8422 / Vc1)).